The primary structure comprises 231 residues: Uridylate kinase (231 aa).

Position 9–12 (9–12 (KLSG)) interacts with ATP. Glycine 49 lines the UMP pocket. Residues glycine 50 and arginine 54 each coordinate ATP. UMP is bound by residues aspartate 69 and 130-137 (AGMPYFST). ATP contacts are provided by asparagine 158, tyrosine 164, and aspartate 167.

This sequence belongs to the UMP kinase family. In terms of assembly, homohexamer.

The protein resides in the cytoplasm. It catalyses the reaction UMP + ATP = UDP + ADP. It participates in pyrimidine metabolism; CTP biosynthesis via de novo pathway; UDP from UMP (UMPK route): step 1/1. With respect to regulation, inhibited by UTP. Functionally, catalyzes the reversible phosphorylation of UMP to UDP. This is Uridylate kinase from Tropheryma whipplei (strain Twist) (Whipple's bacillus).